We begin with the raw amino-acid sequence, 323 residues long: Sporulation-delaying protein SdpB (323 aa).

6 helical membrane-spanning segments follow: residues 27 to 49 (LLGF…SYSA), 70 to 92 (SINF…IGWR), 112 to 134 (LTID…VTLL), 155 to 177 (TVLF…NAAL), 219 to 241 (IVVI…ISNI), and 248 to 270 (LVLG…FGLI).

Its subcellular location is the cell membrane. Its function is as follows. Required for the maturation of SdpC to SDP. Not required for SdpC signal peptide cleavage, secretion from the cell or disulfide bond formation. The sequence is that of Sporulation-delaying protein SdpB from Bacillus subtilis (strain 168).